The chain runs to 184 residues: UPF0301 protein ABSDF3201 (184 aa).

This sequence belongs to the UPF0301 (AlgH) family.

This is UPF0301 protein ABSDF3201 from Acinetobacter baumannii (strain SDF).